The chain runs to 333 residues: Adenosine deaminase (333 aa).

Residues His12 and His14 each coordinate Zn(2+). Residues His14 and Asp16 each contribute to the substrate site. Residues 14–16 (HLD), Ser141, and Gly170 contribute to the pentostatin site. Gly170 is a binding site for substrate. Zn(2+) is bound at residue His197. Pentostatin-binding residues include Glu200, His221, and Asp278. The active-site Proton donor is the Glu200. Asp278 contacts Zn(2+). Asp279 provides a ligand contact to substrate.

This sequence belongs to the metallo-dependent hydrolases superfamily. Adenosine and AMP deaminases family. Adenosine deaminase subfamily. The cofactor is Zn(2+).

It carries out the reaction adenosine + H2O + H(+) = inosine + NH4(+). It catalyses the reaction 2'-deoxyadenosine + H2O + H(+) = 2'-deoxyinosine + NH4(+). In terms of biological role, catalyzes the hydrolytic deamination of adenosine and 2-deoxyadenosine. The sequence is that of Adenosine deaminase from Salmonella typhimurium (strain LT2 / SGSC1412 / ATCC 700720).